The following is a 480-amino-acid chain: 2-phosphoxylose phosphatase 1 (480 aa).

Topologically, residues 1–6 (MLFRNR) are cytoplasmic. A helical; Signal-anchor for type II membrane protein transmembrane segment spans residues 7 to 27 (FLLLLALAALLAFVSLSLQFF). Over 28-480 (HLIPVSTPKN…YYDACHREGF (453 aa)) the chain is Lumenal. The active-site Nucleophile is histidine 97. N-linked (GlcNAc...) asparagine glycosylation is found at asparagine 305 and asparagine 354. Aspartate 379 serves as the catalytic Proton donor.

It belongs to the histidine acid phosphatase family. Interacts with B3GAT3; the interaction increases the 2-phosphoxylose phosphatase activity of PXYLP1 during completion of linkage region formation in a B3GAT3-mediated manner. Widely expressed. Strongly expressed in spleen, fetal liver, moderately in placenta, pancreas, kidney, thymus and colon.

It localises to the golgi apparatus membrane. It carries out the reaction 3-O-[beta-D-GlcA-(1-&gt;3)-beta-D-Gal-(1-&gt;3)-beta-D-Gal-(1-&gt;4)-beta-D-2-O-P-Xyl]-L-seryl-[protein] + H2O = 3-O-(beta-D-GlcA-(1-&gt;3)-beta-D-Gal-(1-&gt;3)-beta-D-Gal-(1-&gt;4)-beta-D-Xyl)-L-seryl-[protein] + phosphate. In terms of biological role, responsible for the 2-O-dephosphorylation of xylose in the glycosaminoglycan-protein linkage region of proteoglycans thereby regulating the amount of mature glycosaminoglycan (GAG) chains. Sulfated glycosaminoglycans (GAGs), including heparan sulfate and chondroitin sulfate, are synthesized on the so-called common GAG-protein linkage region (GlcUAbeta1-3Galbeta1-3Galbeta1-4Xylbeta1-O-Ser) of core proteins, which is formed by the stepwise addition of monosaccharide residues by the respective specific glycosyltransferases. Xylose 2-O-dephosphorylation during completion of linkage region formation is a prerequisite for the initiation and efficient elongation of the repeating disaccharide region of GAG chains. This chain is 2-phosphoxylose phosphatase 1, found in Homo sapiens (Human).